A 62-amino-acid polypeptide reads, in one-letter code: Large ribosomal subunit protein uL29 (62 aa).

It belongs to the universal ribosomal protein uL29 family.

This Laribacter hongkongensis (strain HLHK9) protein is Large ribosomal subunit protein uL29.